The primary structure comprises 901 residues: MGAASCEDEELEFKLVFGEEKEAPPLGPGGPGEELDSEDAPPCCRLALGEPLPYGAAPIGIPRPPPPRPGMHSPPPRPAPSPGTWESQPPRSVRLGGPGGTAGGTGGGRVLECPSIRITSISPTPDPPTSLEDAPETWGDGSPRDYPPPEGFGGYREAGGQGGGAFFSPSPGSSSLSSWSFFSDASDEAALYAACDEVESELNEAASRFGLSSPLPSPRASPRPWTPEDPWSLYGPSSGGRAPEDSWLLLSAPGPIPASPRPASPCGKRRYSSSGTPSSASPALSRRGSLGEEGPEPPPPPPLPLVRDPSSSGPFDYVGAPPTESVPQKTRRTSSEQAVALPRSEEPASCNGKLPSGTEDSVAAPGALRKEMAGMDYLAVPSPLAWSKARIGGHSPIFRTSALPPLDWPLPSQYEQLELRIEVQPRAHHRAHYETEGSRGAVKAAPGGHPVVKLLGYNEKPLTLQMFIGTADERSLRPHAFYQVHRITGKMVATASYEAVVSGTKVLEMTLLPENNMAANIDCAGILKLRNSDIELRKGETDIGRKNTRVRLVFRVHVPQGGGKVVSVQAASVPIECSQRSAQELPQVEAYSPSACSVRGGEELVLTGSNFLPDSKVVFIERGPDGKLQWEEEAAVNRLQSSEVTLTLTIPEYSNKRVSRPVQVYFYVSNGRRKRSPTQSFKFLPVIFKEEPLPDSSLRGFPSTSGPPFGPDMDFSPPRPPYPSYPHEDPAYETPYLSEGFGYSTPALYPQTGPPPSYRSGLRMFPETGGTTGCARLPSVSFLPRPFPGDQYGGQGSSFPLGLPFSPPAPFRPPLPSSPPLEDPFNPQSAVHPLPAEGYNEVGPGYTPGEGASEQEKSRGGYGSGFRDNVPIQGITLEEVSEIIGRDLSGFPARPGEEPPA.

Residues Met1–Leu11 show a composition bias toward acidic residues. 2 disordered regions span residues Met1 to Ser180 and Asn203 to Ser361. Positions Ile61 to Ser81 are enriched in pro residues. The segment covering Gly96–Arg109 has biased composition (gly residues). The interval Pro114–Thr119 is calcineurin-binding. The segment covering Pro114–Pro123 has biased composition (low complexity). Residues Gly151–Ala165 are compositionally biased toward gly residues. The segment covering Phe166–Ser180 has biased composition (low complexity). 4 positions are modified to phosphoserine: Ser168, Ser170, Ser213, and Ser217. The stretch at Ser213–Asp229 is one SP 1 repeat. The interval Ser213–Glu293 is 2 approximate SP repeats. Composition is skewed to pro residues over residues Leu215–Pro227 and Gly254–Ala263. A Nuclear localization signal motif is present at residues Lys268–Arg270. Positions Ser272–Gly288 are enriched in low complexity. Residues Pro277–Glu293 form an SP 2; approximate repeat. Ser289, Ser334, and Ser344 each carry phosphoserine. One can recognise an RHD domain in the interval Ser401 to Ala582. Residues Arg430 to Gly437 mediate DNA binding. The 98-residue stretch at Pro586 to Phe683 folds into the IPT/TIG domain. Positions Arg672–Lys674 match the Nuclear localization signal motif. A Glycyl lysine isopeptide (Lys-Gly) (interchain with G-Cter in SUMO2) cross-link involves residue Lys689. 2 disordered regions span residues Ser697–Pro721 and Gln791–Asp868. Residues Phe805 to Glu822 show a composition bias toward pro residues.

In terms of assembly, member of the multicomponent NFATC transcription complex that consists of at least two components, a pre-existing cytoplasmic component NFATC2 and an inducible nuclear component NFATC1. Other NFAT proteins, such as NFATC4, NFATC3, or members of the activating protein-1 (AP-1) family and MAF can also bind the complex. NFAT proteins can bind DNA as monomers or dimers. Component of a promoter-binding complex composed of STAT3, NFATC3 and NFATC4; complex formation is enhanced by calcineurin. Interacts with CREBBP; this interaction potentiates transcription activation. Interacts with MAPK8/JNK1 and MAPK9/JNK2. Interacts with GATA4 (via the second Zn finger). Interacts (via N-terminus) with IRAK1 (via C-terminus). Interacts with RPS6KA3. Interacts with HOMER1, HOMER2 and HOMER3; this interaction competes with calcineurin/PPP3CA-binding and hence prevents NFATC4 dephosphorylation and activation. Interacts with ESR1 and ESR2; this interaction decreases NFATC4 transcriptional activity. Interacts with MTOR and MAPK7/ERK5. Interacts with TRIM17; this interaction prevents NFATC3 nuclear localization. Interacts with TCF25 (via C-terminus); the interaction leads to suppression of NFATC4 transcription factor activity and is reduced following stimulation with angiotensin-2. Phosphorylated by NFATC-kinases; dephosphorylated by calcineurin/PPP3CA. Phosphorylated on Ser-168 and Ser-170 by MTOR, IRAK1, MAPK7/ERK5 and MAPK14/p38, on Ser-213 and Ser-217 by MAPK8 and MAPK9, and on Ser-289 and Ser-344 by RPS6KA3. Phosphorylated by GSK3B; this phosphorylation markedly increases NFATC4 ubiquitination. Phosphorylation by MAPK8/JNK1, MAPK9/JNK2 and RPS6KA3 may stimulate NFATC4 transcriptional activity. Phosphorylation at Ser-168 and Ser-170 is stimulated by UV irradiation. Post-translationally, ubiquitinated, leading to degradation by the proteasome. Ubiquitination may be stimulated by GSK3B-dependent phosphorylation. Polyubiquitin linkage mainly occurs through 'Lys-48'. As to expression, expressed in heart (at protein level).

The protein resides in the cytoplasm. It localises to the nucleus. In terms of biological role, ca(2+)-regulated transcription factor that is involved in several processes, including the development and function of the immune, cardiovascular, musculoskeletal, and nervous systems. Involved in T-cell activation, stimulating the transcription of cytokine genes, including that of IL2 and IL4. Along with NFATC3, involved in embryonic heart development. Following JAK/STAT signaling activation and as part of a complex with NFATC3 and STAT3, binds to the alpha-beta E4 promoter region of CRYAB and activates transcription in cardiomyocytes. Involved in mitochondrial energy metabolism required for cardiac morphogenesis and function. Transactivates many genes involved in heart physiology. Along with GATA4, binds to and activates NPPB/BNP promoter. Activates NPPA/ANP/ANF and MYH7/beta-MHC transcription. Binds to and transactivates AGTR2 gene promoter. Involved in the regulation of adult hippocampal neurogenesis. Involved in BDNF-driven pro-survival signaling in hippocampal adult-born neurons. Involved in the formation of long-term spatial memory and long-term potentiation. In cochlear nucleus neurons, may play a role in deafferentation-induced apoptosis during a developmental critical period when auditory neurons depend on afferent input for survival. Binds to and activates the BACE1/Beta-secretase 1 promoter, hence may regulate the proteolytic processing of the amyloid precursor protein (APP). Plays a role in adipocyte differentiation. May be involved in myoblast differentiation into myotubes. Binds the consensus DNA sequence 5'-GGAAAAT-3'. In the presence of CREBBP, activates TNF transcription. Binds to PPARG gene promoter and regulates its activity. Binds to PPARG and REG3G gene promoters. This Rattus norvegicus (Rat) protein is Nuclear factor of activated T-cells, cytoplasmic 4 (Nfatc4).